The sequence spans 210 residues: Large ribosomal subunit protein uL4 (210 aa).

The span at 41 to 52 (MNNARQGTASSK) shows a compositional bias: polar residues. The interval 41 to 80 (MNNARQGTASSKTRSEVRGGGRKPWRQKGTGRARAGSSRS) is disordered. Over residues 60–71 (GGRKPWRQKGTG) the composition is skewed to basic residues.

Belongs to the universal ribosomal protein uL4 family. In terms of assembly, part of the 50S ribosomal subunit.

Its function is as follows. One of the primary rRNA binding proteins, this protein initially binds near the 5'-end of the 23S rRNA. It is important during the early stages of 50S assembly. It makes multiple contacts with different domains of the 23S rRNA in the assembled 50S subunit and ribosome. Functionally, forms part of the polypeptide exit tunnel. The polypeptide is Large ribosomal subunit protein uL4 (Acaryochloris marina (strain MBIC 11017)).